A 145-amino-acid chain; its full sequence is uncharacterized protein (145 aa).

A helical membrane pass occupies residues 4–24 (IYMLVALLISSLVLFAGCVQN).

Its subcellular location is the membrane. This is an uncharacterized protein from Methanocaldococcus jannaschii (strain ATCC 43067 / DSM 2661 / JAL-1 / JCM 10045 / NBRC 100440) (Methanococcus jannaschii).